A 1323-amino-acid polypeptide reads, in one-letter code: Glutamate receptor ionotropic, NMDA 2D (1323 aa).

Residues 1–27 form the signal peptide; sequence MRGAGGPRGPRGPAKMLLLLALACASP. Residues 28 to 579 lie on the Extracellular side of the membrane; it reads FPEEVPGPGA…SPSAFLEPYS (552 aa). An N-linked (GlcNAc...) asparagine glycan is attached at Asn-89. Cys-101 and Cys-345 are oxidised to a cystine. Residues Asn-349, Asn-363, Asn-381, and Asn-464 are each glycosylated (N-linked (GlcNAc...) asparagine). 2 cysteine pairs are disulfide-bonded: Cys-452-Cys-480 and Cys-459-Cys-481. The L-glutamate site is built by Ser-536, Thr-538, and Arg-543. N-linked (GlcNAc...) asparagine glycosylation is present at Asn-566. The helical transmembrane segment at 580–601 threads the bilayer; the sequence is PAVWVMMFVMCLTVVAVTVFIF. The Cytoplasmic segment spans residues 602–626; that stretch reads EYLSPVGYNRSLATGKRPGGSTFTI. Positions 627-638 form an intramembrane region, discontinuously helical; it reads GKSIWLLWALVF. A pore-forming region spans residues 628-647; it reads KSIWLLWALVFNNSVPVENP. Residues 639-650 are Cytoplasmic-facing; sequence NNSVPVENPRGT. A helical membrane pass occupies residues 651 to 671; the sequence is TSKIMVLVWAFFAVIFLASYT. Topologically, residues 672–840 are extracellular; sequence ANLAAFMIQE…EVMSSKLDID (169 aa). Asn-712 carries an N-linked (GlcNAc...) asparagine glycan. Ser-714, Thr-715, and Asp-756 together coordinate L-glutamate. Cys-770 and Cys-825 are oxidised to a cystine. Residues 841-864 form a helical membrane-spanning segment; the sequence is NMAGVFYMLLVAMGLSLLVFAWEH. The Cytoplasmic segment spans residues 865 to 1323; it reads LVYWRLRHCL…AHFSSLESEV (459 aa). Disordered regions lie at residues 897-952, 977-1112, and 1201-1323; these read EAAP…PGGA, AAPR…SLGG, and PWAA…ESEV. Over residues 899 to 929 the composition is skewed to pro residues; sequence APPPAKPPPPPQPLPSPAYPAARPPPGPAPF. The segment covering 931-940 has biased composition (basic and acidic residues); that stretch reads PRERAAADRW. Residues 977 to 986 are compositionally biased toward low complexity; it reads AAPRGAAGRP. Pro residues predominate over residues 987 to 1001; it reads LSPPTTQPPQKPPPS. Residues 1030–1039 show a composition bias toward low complexity; that stretch reads AAAAAAVGPP. Over residues 1080 to 1092 the composition is skewed to pro residues; it reads TAPPPRRAAPPPC. Residues 1208–1228 are compositionally biased toward basic residues; that stretch reads PRRRARCGCPRPHPHRPRASH. An Omega-N-methylarginine modification is found at Arg-1303. Position 1313 is a phosphoserine (Ser-1313). The PDZ-binding signature appears at 1321–1323; sequence SEV.

This sequence belongs to the glutamate-gated ion channel (TC 1.A.10.1) family. NR2D/GRIN2D subfamily. As to quaternary structure, heterotetramer. Forms heterotetrameric channels composed of two GluN1/zeta subunits (GRIN1), and two identical GluN2/epsilon subunits (GRIN2A, GRIN2B, GRIN2C or GRIN2D) or GluN3 subunits (GRIN3A or GRIN3B) (in vitro). In vivo, the subunit composition may depend on the expression levels of the different subunits. Interacts with PDZ domains of PATJ and DLG4. In terms of tissue distribution, detected in neonate brain synaptosomes (at protein level).

The protein resides in the cell membrane. It localises to the postsynaptic cell membrane. The enzyme catalyses Ca(2+)(in) = Ca(2+)(out). It carries out the reaction Na(+)(in) = Na(+)(out). The catalysed reaction is K(+)(in) = K(+)(out). Component of N-methyl-D-aspartate (NMDA) receptors (NMDARs) that function as heterotetrameric, ligand-gated cation channels with high calcium permeability and voltage-dependent block by Mg(2+). Participates in synaptic plasticity for learning and memory formation. Channel activation requires binding of the neurotransmitter L-glutamate to the GluN2 subunit, glycine or D-serine binding to the GluN1 subunit, plus membrane depolarization to eliminate channel inhibition by Mg(2+). NMDARs mediate simultaneously the potasium efflux and the influx of calcium and sodium. Each GluN2 subunit confers differential attributes to channel properties, including activation, deactivation and desensitization kinetics, pH sensitivity, Ca2(+) permeability, and binding to allosteric modulators. The polypeptide is Glutamate receptor ionotropic, NMDA 2D (Mus musculus (Mouse)).